Here is a 913-residue protein sequence, read N- to C-terminus: Protein translocase subunit SecA (913 aa).

Residues Gln87, 105–109, and Asp512 each bind ATP; that span reads GEGKT. The Zn(2+) site is built by Cys897, Cys899, Cys908, and His909.

The protein belongs to the SecA family. As to quaternary structure, monomer and homodimer. Part of the essential Sec protein translocation apparatus which comprises SecA, SecYEG and auxiliary proteins SecDF-YajC and YidC. It depends on Zn(2+) as a cofactor.

Its subcellular location is the cell inner membrane. The protein localises to the cytoplasm. The enzyme catalyses ATP + H2O + cellular proteinSide 1 = ADP + phosphate + cellular proteinSide 2.. Its function is as follows. Part of the Sec protein translocase complex. Interacts with the SecYEG preprotein conducting channel. Has a central role in coupling the hydrolysis of ATP to the transfer of proteins into and across the cell membrane, serving both as a receptor for the preprotein-SecB complex and as an ATP-driven molecular motor driving the stepwise translocation of polypeptide chains across the membrane. This chain is Protein translocase subunit SecA, found in Pseudomonas syringae pv. syringae (strain B728a).